The chain runs to 421 residues: Phosphatidate cytidylyltransferase 1 (421 aa).

An N-acetylmethionine modification is found at Met1. Over residues 1–12 (MEEENVTSSPST) the composition is skewed to polar residues. The disordered stretch occupies residues 1–26 (MEEENVTSSPSTPVHRLRHRRRSNEV). Transmembrane regions (helical) follow at residues 60 to 80 (IGGF…MVVV), 102 to 122 (LPYI…FVYG), 149 to 169 (YHMA…ILTL), 183 to 203 (WTHM…ANIF), 206 to 226 (IFWF…AYIF), 246 to 266 (GFIG…NILG), 321 to 341 (LCLG…ASGF), and 369 to 389 (VMAV…SVSV).

It belongs to the CDS family. Requires Mg(2+) as cofactor.

Its subcellular location is the membrane. The enzyme catalyses a 1,2-diacyl-sn-glycero-3-phosphate + CTP + H(+) = a CDP-1,2-diacyl-sn-glycerol + diphosphate. It participates in phospholipid metabolism; CDP-diacylglycerol biosynthesis; CDP-diacylglycerol from sn-glycerol 3-phosphate: step 3/3. Its function is as follows. May be involved in the synthesis of minor phospholipids and in modulation of IP3-mediated signal transduction. The protein is Phosphatidate cytidylyltransferase 1 of Arabidopsis thaliana (Mouse-ear cress).